The chain runs to 329 residues: Capsular polysaccharide phosphotransferase WcwK (329 aa).

The protein belongs to the stealth family.

The sequence is that of Capsular polysaccharide phosphotransferase WcwK (wcwK) from Streptococcus pneumoniae.